Here is a 66-residue protein sequence, read N- to C-terminus: MKAADVRAMTTDQLDDELANLKKEQFNLRFQKATGQLEKTARVKQIRRDIARIKTIAAEKSAGKKA.

Belongs to the universal ribosomal protein uL29 family.

This chain is Large ribosomal subunit protein uL29, found in Chelativorans sp. (strain BNC1).